An 862-amino-acid polypeptide reads, in one-letter code: Switch 2 (862 aa).

Disordered regions lie at residues 13–43 (PCGS…SSLS) and 58–95 (KHES…DDER). The segment covering 16 to 27 (SFPSSSSLRVSS) has biased composition (low complexity). Positions 58–84 (KHESKISKTQVEDFDHNEDDHKRNIKF) are enriched in basic and acidic residues. A compositionally biased stretch (acidic residues) spans 85 to 95 (DEEEVDEDDER). A Helicase ATP-binding domain is found at 151 to 323 (YNLYKNNHGG…FNLFEWVAPG (173 aa)). 164 to 171 (DDMGLGKT) provides a ligand contact to ATP. Residues 274–277 (DEAH) carry the DEAH box motif. Residues 274-294 (DEAHRLKNEKSKLYEACLEIK) adopt a coiled-coil conformation. The region spanning 532 to 685 (ALEKLMASWI…VAGKMETRYF (154 aa)) is the Helicase C-terminal domain. A compositionally biased stretch (polar residues) spans 782–793 (TTSTSQRLNGDG). Residues 782-821 (TTSTSQRLNGDGNSADRKKKKRKGCSEEEDMSSSNREQKR) are disordered.

Belongs to the SNF2/RAD54 helicase family.

May be involved in early DNA damage response. Probable chromatin remodeling factor. This Arabidopsis thaliana (Mouse-ear cress) protein is Switch 2.